The chain runs to 677 residues: Methionine--tRNA ligase (677 aa).

The short motif at 15-25 is the 'HIGH' region element; it reads PYANGSIHLGH. Zn(2+)-binding residues include Cys-146, Cys-149, Cys-159, and Cys-162. The 'KMSKS' region motif lies at 333–337; sequence KMSKS. Lys-336 is an ATP binding site. A tRNA-binding domain is found at 575–677; the sequence is DFAKIDLRVA…DGAKPGQQVK (103 aa).

This sequence belongs to the class-I aminoacyl-tRNA synthetase family. MetG type 1 subfamily. As to quaternary structure, homodimer. Requires Zn(2+) as cofactor.

It is found in the cytoplasm. The enzyme catalyses tRNA(Met) + L-methionine + ATP = L-methionyl-tRNA(Met) + AMP + diphosphate. Its function is as follows. Is required not only for elongation of protein synthesis but also for the initiation of all mRNA translation through initiator tRNA(fMet) aminoacylation. The polypeptide is Methionine--tRNA ligase (Salmonella choleraesuis (strain SC-B67)).